The chain runs to 1063 residues: Structural polyprotein (1063 aa).

The disordered stretch occupies residues 1–131; it reads MASTTPITME…LGPPTNPFQA (131 aa). The segment at 30–69 is human C1QBP/SF2P32-binding; sequence GASQSRRPRPPRQRDSSTSGDDSGRDSGGPRRRRGNRGRG. At serine 46 the chain carries Phosphoserine; by host. A compositionally biased stretch (basic and acidic residues) spans 70–87; that stretch reads QLRDWSRAPPPPEERQES. Pro residues predominate over residues 93–107; the sequence is APKPSRAPPQQPQPP. Cysteine 153 and cysteine 197 form a disulfide bridge. The tract at residues 279-300 is functions as E2 signal peptide; it reads GAPQAFLAGLLLAAVAVGTARA. Residues 301-534 lie on the Extracellular side of the membrane; it reads GLQPRADMAA…LWLATANALS (234 aa). Asparagine 353, asparagine 371, asparagine 410, and asparagine 429 each carry an N-linked (GlcNAc...) asparagine; by host glycan. Residues 535 to 555 traverse the membrane as a helical segment; it reads LDHALAAFVLLVPWVLIFMVC. Residues 556-582 lie on the Cytoplasmic side of the membrane; that stretch reads RRACRRRGAAAALTAVVLQGYNPPAYG. The tract at residues 563–582 is functions as E1 signal peptide; that stretch reads GAAAALTAVVLQGYNPPAYG. Residues 583 to 1028 lie on the Extracellular side of the membrane; sequence EEAFTYLCTA…QTWAEWAAAH (446 aa). Disulfide bonds link cysteine 590–cysteine 595, cysteine 619–cysteine 824, cysteine 641–cysteine 653, cysteine 699–cysteine 712, cysteine 758–cysteine 767, cysteine 807–cysteine 817, cysteine 931–cysteine 934, and cysteine 950–cysteine 983. N-linked (GlcNAc...) asparagine; by host glycosylation occurs at asparagine 658. 2 residues coordinate Ca(2+): asparagine 670 and alanine 671. Ca(2+) is bound by residues aspartate 718 and threonine 719. N-linked (GlcNAc...) asparagine; by host glycans are attached at residues asparagine 759 and asparagine 791. Residues threonine 1011 and threonine 1012 are each glycosylated (O-linked (GalNAc...) threonine; by host). The helical transmembrane segment at 1029 to 1049 threads the bilayer; that stretch reads WWQLTLGAICALLLAGLLACC. Residues 1050–1063 lie on the Extracellular side of the membrane; sequence AKCLYYLRGAIAPR.

As to quaternary structure, homodimer; further assembles into homooligomer. Interacts with human C1QBP. Interacts (via N-terminus) with protease/methyltransferase p150. Heterodimer with spike glycoprotein E2. In terms of assembly, heterodimer with spike glycoprotein E1. In terms of processing, structural polyprotein: Specific enzymatic cleavages in vivo yield mature proteins. Two signal peptidase-mediated cleavages within the polyprotein produce the structural proteins capsid, E2, and E1. The E2 signal peptide remains attached to the C-terminus of the capsid protein after cleavage by the signal peptidase. Another signal peptide at E2 C-terminus directs E1 to the ER, with a similar mechanism. Contains three N-linked oligosaccharides. Post-translationally, capsid is phosphorylated on Ser-46 by host. This phosphorylation negatively regulates capsid protein RNA-binding activity. Dephosphorylated by human PP1A.

The protein localises to the virion. The protein resides in the host cytoplasm. It localises to the host mitochondrion. Its subcellular location is the virion membrane. It is found in the host Golgi apparatus membrane. Functionally, capsid protein interacts with genomic RNA and assembles into icosahedric core particles 65-70 nm in diameter. The resulting nucleocapsid eventually associates with the cytoplasmic domain of E2 at the cell membrane, leading to budding and formation of mature virions from host Golgi membranes. Phosphorylation negatively regulates RNA-binding activity, possibly delaying virion assembly during the viral replication phase. Capsid protein dimerizes and becomes disulfide-linked in the virion. Modulates genomic RNA replication. Modulates subgenomic RNA synthesis by interacting with human C1QBP/SF2P32. Induces both perinuclear clustering of mitochondria and the formation of electron-dense intermitochondrial plaques, both hallmarks of rubella virus infected cells. Induces apoptosis when expressed in transfected cells. Its function is as follows. Responsible for viral attachment to target host cell, by binding to the cell receptor. Its transport to the plasma membrane depends on interaction with E1 protein. The surface glycoproteins display an irregular helical organization and a pseudo-tetrameric inner nucleocapsid arrangement. In terms of biological role, class II viral fusion protein. Fusion activity is inactive as long as E1 is bound to E2 in mature virion. After virus attachment to target cell and clathrin-mediated endocytosis, acidification of the endosome would induce dissociation of E1/E2 heterodimer and concomitant trimerization of the E1 subunits. This E1 homotrimer is fusion active, and promotes release of viral nucleocapsid in cytoplasm after endosome and viral membrane fusion. The cytoplasmic tail of spike glycoprotein E1 modulates virus release. The surface glycoproteins display an irregular helical organization and a pseudo-tetrameric inner nucleocapsid arrangement. This Homo sapiens (Human) protein is Structural polyprotein.